The sequence spans 229 residues: RNA pyrophosphohydrolase (229 aa).

The Nudix hydrolase domain maps to 6–149; that stretch reads GFRPNVGIIL…KRGVYEMALT (144 aa). Positions 38–59 match the Nudix box motif; it reads GGIDRGETPEQAMFRELHEEVG. The segment at 191-229 is disordered; sequence KPGMELPPGASFDPDPQNSVPAPLEALPTLPVPKKPLDA. Residues 220-229 are compositionally biased toward pro residues; that stretch reads LPVPKKPLDA.

It belongs to the Nudix hydrolase family. RppH subfamily. The cofactor is a divalent metal cation.

In terms of biological role, accelerates the degradation of transcripts by removing pyrophosphate from the 5'-end of triphosphorylated RNA, leading to a more labile monophosphorylated state that can stimulate subsequent ribonuclease cleavage. This Acidovorax ebreus (strain TPSY) (Diaphorobacter sp. (strain TPSY)) protein is RNA pyrophosphohydrolase.